We begin with the raw amino-acid sequence, 622 residues long: Protein translocase subunit SecD (622 aa).

A run of 6 helical transmembrane segments spans residues 6–26 (FKIG…YPTV), 460–480 (AGLR…IFYY), 485–505 (MIAD…LAAF), 512–532 (PGIA…VLIF), 559–579 (AIFD…SFGV), and 584–604 (GFAV…IVIT).

Belongs to the SecD/SecF family. SecD subfamily. Forms a complex with SecF. Part of the essential Sec protein translocation apparatus which comprises SecA, SecYEG and auxiliary proteins SecDF. Other proteins may also be involved.

It localises to the cell inner membrane. Its function is as follows. Part of the Sec protein translocase complex. Interacts with the SecYEG preprotein conducting channel. SecDF uses the proton motive force (PMF) to complete protein translocation after the ATP-dependent function of SecA. The chain is Protein translocase subunit SecD from Rhodothermus marinus (strain ATCC 43812 / DSM 4252 / R-10) (Rhodothermus obamensis).